Here is a 377-residue protein sequence, read N- to C-terminus: MAATEDERPTGSGEGERLDFLRDRHVRFFQRCLQVLPERYSSLETSRLTIAFFALSGLDMLDSLDVVNKDDIIEWIYSLQVLPTEDRSNLNRCGFRGSSYLGIPFNPSKNPGTAHPYDSGHIAMTYTGLSCLVILGDDLSRVNKEACLAGLRALQLEDGSFCAVPEGSENDMRFVYCASCICYMLNNWSGMDMKKAINYIRRSMSYDNGLAQGAGLESHGGSTFCGIASLCLMGKLEEVFSEKELNRIKRWCIMRQQNGYHGRPNKPVDTCYSFWVGATLKLLKIFQYTNFEKNRNYILSTQDRLVGGFAKWPDSHPDALHAYFGICGLSLMEESGICKVHPALNVSTRTSERLRDLHQSWKTKDSKQCSENVHIST.

PFTB repeat units lie at residues 144-186, 193-234, 245-284, and 291-333; these read KEAC…YMLN, MKKA…CLMG, LNRI…KLLK, and FEKN…SLME. Residues 219 to 221 and 263 to 266 contribute to the geranylgeranyl diphosphate site; these read HGG and RPNK. The Zn(2+) site is built by Asp269 and Cys271. 272–275 contributes to the geranylgeranyl diphosphate binding site; the sequence is YSFW. A Zn(2+)-binding site is contributed by His321.

The protein belongs to the protein prenyltransferase subunit beta family. Heterodimer of FNTA and PGGT1B. PGGT1B mediates interaction with substrate peptides. Requires Zn(2+) as cofactor. Mg(2+) is required as a cofactor.

The enzyme catalyses geranylgeranyl diphosphate + L-cysteinyl-[protein] = S-geranylgeranyl-L-cysteinyl-[protein] + diphosphate. In terms of biological role, catalyzes the transfer of a geranyl-geranyl moiety from geranyl-geranyl pyrophosphate to a cysteine at the fourth position from the C-terminus of proteins having the C-terminal sequence Cys-aliphatic-aliphatic-X. Known substrates include RAC1, RAC2, RAP1A and RAP1B. The chain is Geranylgeranyl transferase type-1 subunit beta (PGGT1B) from Bos taurus (Bovine).